Consider the following 347-residue polypeptide: MTVDNRCSNSSLCLRNVTPKQHPARVCSNHWQLKNLISTQNTGEESNPIYYTNSVFVWKIYPNSEKVVQVGQGLSFKPLSLLGKCGYIAAGGQLGEFDYWSPTSKQTHMKLCDQHNNGIEIHRRNCDSHAEALISSNDHTIKVVDLEHGLLRKQLHFPVNMNHASVSNDGRFMVCVGDSPQVFFYEIDRSGEYHLRHTTVADTTDSSFCTSISQRNELFAVASQDSSLSVFDVRYLRTPMLTKTSSRPDPNGSIRSCHFTPPNGGPLDLLLYSEGFSYSHLLDLRTGKDVELVLPSEDRFFSPASQDIFGSCFADDGSSVYVASATHLYEWNIDKRSRICFPSYQLL.

The protein localises to the cytoplasm. The protein resides in the nucleus. This is an uncharacterized protein from Schizosaccharomyces pombe (strain 972 / ATCC 24843) (Fission yeast).